The following is a 394-amino-acid chain: Chorismate synthase (394 aa).

2 residues coordinate NADP(+): Arg-42 and Arg-48. FMN-binding positions include 137–139 (RAS), 258–259 (QA), Gly-302, 317–321 (KPIAT), and Arg-343.

The protein belongs to the chorismate synthase family. Homotetramer. The cofactor is FMNH2.

The catalysed reaction is 5-O-(1-carboxyvinyl)-3-phosphoshikimate = chorismate + phosphate. Its pathway is metabolic intermediate biosynthesis; chorismate biosynthesis; chorismate from D-erythrose 4-phosphate and phosphoenolpyruvate: step 7/7. Functionally, catalyzes the anti-1,4-elimination of the C-3 phosphate and the C-6 proR hydrogen from 5-enolpyruvylshikimate-3-phosphate (EPSP) to yield chorismate, which is the branch point compound that serves as the starting substrate for the three terminal pathways of aromatic amino acid biosynthesis. This reaction introduces a second double bond into the aromatic ring system. The chain is Chorismate synthase from Streptomyces avermitilis (strain ATCC 31267 / DSM 46492 / JCM 5070 / NBRC 14893 / NCIMB 12804 / NRRL 8165 / MA-4680).